The following is a 232-amino-acid chain: MWAWALLPVFLAVFGTVGLWAVYAIAVSNNSVNITIEFPYISTCGAYTPQSCLFAQICNICCVLALWIVVIRFQQIRDLGRSSHLNTAGLVLGFISSIGISILGNFQQTIIQEVHLLGALMAFFLGLAYFWIQAFITYFSPPSRDNKWLVPVRFVLCSQCTCMVICMFVLHSTGFRSAAAICEWILVMCFFALFGVFAAEFRHIDFHKLTVQKEGLKVANNDNVVWTVQDVQ.

The Cytoplasmic segment spans residues 1–6 (MWAWAL). The chain crosses the membrane as a helical span at residues 7-27 (LPVFLAVFGTVGLWAVYAIAV). Residues 28–50 (SNNSVNITIEFPYISTCGAYTPQ) lie on the Extracellular side of the membrane. Residues Asn29 and Asn33 are each glycosylated (N-linked (GlcNAc...) asparagine). A helical membrane pass occupies residues 51-71 (SCLFAQICNICCVLALWIVVI). Residues 72 to 83 (RFQQIRDLGRSS) lie on the Cytoplasmic side of the membrane. The helical transmembrane segment at 84–104 (HLNTAGLVLGFISSIGISILG) threads the bilayer. Residues 105 to 115 (NFQQTIIQEVH) lie on the Extracellular side of the membrane. A helical transmembrane segment spans residues 116-136 (LLGALMAFFLGLAYFWIQAFI). Topologically, residues 137–153 (TYFSPPSRDNKWLVPVR) are cytoplasmic. The helical transmembrane segment at 154–174 (FVLCSQCTCMVICMFVLHSTG) threads the bilayer. Residues 175–177 (FRS) lie on the Extracellular side of the membrane. The helical transmembrane segment at 178 to 198 (AAAICEWILVMCFFALFGVFA) threads the bilayer. Topologically, residues 199–232 (AEFRHIDFHKLTVQKEGLKVANNDNVVWTVQDVQ) are cytoplasmic.

Belongs to the DRAM/TMEM150 family.

Its subcellular location is the cell membrane. It localises to the endosome membrane. The protein localises to the cytoplasmic vesicle. It is found in the autophagosome membrane. Its function is as follows. Modulator of macroautophagy that causes accumulation of autophagosomes under basal conditions and enhances autophagic flux. Represses cell death and promotes long-term clonogenic survival of cells grown in the absence of glucose in a macroautophagy-independent manner. May have some role in extracellular matrix engulfment or growth factor receptor recycling, both of which can modulate cell survival. In Danio rerio (Zebrafish), this protein is Modulator of macroautophagy TMEM150B.